Here is a 265-residue protein sequence, read N- to C-terminus: Hydroxyethylthiazole kinase (265 aa).

Position 36 (Met-36) interacts with substrate. Positions 112 and 160 each coordinate ATP. Gly-187 contributes to the substrate binding site.

It belongs to the Thz kinase family. It depends on Mg(2+) as a cofactor.

The enzyme catalyses 5-(2-hydroxyethyl)-4-methylthiazole + ATP = 4-methyl-5-(2-phosphooxyethyl)-thiazole + ADP + H(+). It functions in the pathway cofactor biosynthesis; thiamine diphosphate biosynthesis; 4-methyl-5-(2-phosphoethyl)-thiazole from 5-(2-hydroxyethyl)-4-methylthiazole: step 1/1. In terms of biological role, catalyzes the phosphorylation of the hydroxyl group of 4-methyl-5-beta-hydroxyethylthiazole (THZ). The sequence is that of Hydroxyethylthiazole kinase from Clostridium perfringens (strain 13 / Type A).